Reading from the N-terminus, the 899-residue chain is Core protein VP3 (899 aa).

The tract at residues 1 to 22 (MAEPPDAATPKTSPYLKGDELS) is disordered.

The protein belongs to the orbivirus VP3 family.

It is found in the virion. Functionally, the VP3 protein is one of the five proteins (with VP1, VP4, VP6 and VP7) which form the inner capsid of the virus. This is Core protein VP3 (Segment-3) from Antilocapra americana (Pronghorn).